A 570-amino-acid polypeptide reads, in one-letter code: Frizzled-2 (570 aa).

The N-terminal stretch at 1-28 is a signal peptide; it reads MRARSALPRSALPRLLLPLLLLPAAGPA. Topologically, residues 29-252 are extracellular; sequence QFHGEKGISI…QEETRFARLW (224 aa). The 120-residue stretch at 39–158 folds into the FZ domain; that stretch reads PDHGFCQPIS…HGAEQICVGQ (120 aa). Intrachain disulfides connect Cys44–Cys105, Cys52–Cys98, Cys89–Cys126, Cys115–Cys155, and Cys119–Cys143. The N-linked (GlcNAc...) asparagine glycan is linked to Asn58. Asn159 is a glycosylation site (N-linked (GlcNAc...) asparagine). The segment at 166–194 is disordered; it reads PALLTTAPPSGLQPGAGGTPGGPGGGGSP. Residues 179–193 are compositionally biased toward gly residues; it reads PGAGGTPGGPGGGGS. A helical transmembrane segment spans residues 253–273; sequence ILTWSVLCCASTFFTVTTYLV. Over 274–284 the chain is Cytoplasmic; the sequence is DMQRFRYPERP. Residues 285 to 305 form a helical membrane-spanning segment; sequence IIFLSGCYTMVSVAYIAGFVL. Residues 306–332 lie on the Extracellular side of the membrane; that stretch reads QERVVCNERFSEDGYRTVVQGTKKEGC. The helical transmembrane segment at 333-353 threads the bilayer; sequence TILFMMLYFFSMASSIWWVIL. Topologically, residues 354–375 are cytoplasmic; the sequence is SLTWFLAAGMKWGHEAIEANSQ. The helical transmembrane segment at 376 to 396 threads the bilayer; it reads YFHLAAWAVPAVKTITILAMG. Residues 397–419 lie on the Extracellular side of the membrane; the sequence is QIDGDLLSGVCFVGLNSLDPLRG. Residues 420–440 form a helical membrane-spanning segment; the sequence is FVLAPLFVYLFIGTSFLLAGF. Residues 441 to 466 lie on the Cytoplasmic side of the membrane; it reads VSLFRIRTIMKHDGTKTEKLERLMVR. The chain crosses the membrane as a helical span at residues 467–487; it reads IGVFSVLYTVPATIVIACYFY. At 488 to 524 the chain is on the extracellular side; the sequence is EQAFREHWERSWVSQHCKSLAIPCPAHYTPRMSPDFT. Residues 525-545 form a helical membrane-spanning segment; it reads VYMIKYLMTLIVGITSGFWIW. At 546 to 570 the chain is on the cytoplasmic side; it reads SGKTLHSWRKFYTRLTNSRHGETTV. Positions 548–553 match the Lys-Thr-X-X-X-Trp motif, mediates interaction with the PDZ domain of Dvl family members motif; sequence KTLHSW. The PDZ-binding motif lies at 568-570; that stretch reads TTV.

Belongs to the G-protein coupled receptor Fz/Smo family. In terms of processing, ubiquitinated by ZNRF3, leading to its degradation by the proteasome. In terms of tissue distribution, expressed in embryonic and adult heart, lung, chondrocytes and brain. Also expressed in the developing gastrointestinal tract (strongest in foregut), much weaker expression in the adult. No expression in fetal liver and adult spleen. Up-regulated in esophageal squamous cell carcinomas.

The protein localises to the membrane. It is found in the cell membrane. Functionally, receptor for Wnt proteins. Most of frizzled receptors are coupled to the beta-catenin canonical signaling pathway, which leads to the activation of disheveled proteins, inhibition of GSK-3 kinase, nuclear accumulation of beta-catenin and activation of Wnt target genes. A second signaling pathway involving PKC and calcium fluxes has been seen for some family members, but it is not yet clear if it represents a distinct pathway or if it can be integrated in the canonical pathway, as PKC seems to be required for Wnt-mediated inactivation of GSK-3 kinase. Both pathways seem to involve interactions with G-proteins. May be involved in transduction and intercellular transmission of polarity information during tissue morphogenesis and/or in differentiated tissues. The chain is Frizzled-2 (Fzd2) from Mus musculus (Mouse).